The sequence spans 87 residues: Small ribosomal subunit protein bS20 (87 aa).

The tract at residues 1–26 (MANHKSAIKRHKQSQKRAARNRAAKT) is disordered.

This sequence belongs to the bacterial ribosomal protein bS20 family.

Binds directly to 16S ribosomal RNA. The polypeptide is Small ribosomal subunit protein bS20 (Nitratidesulfovibrio vulgaris (strain DSM 19637 / Miyazaki F) (Desulfovibrio vulgaris)).